Here is an 800-residue protein sequence, read N- to C-terminus: Signaling protein YkoW (800 aa).

A run of 7 helical transmembrane segments spans residues 5–27 (VTYN…YISL), 44–66 (WLIG…GMMA), 76–98 (EFMP…LYFV), 103–125 (LTYY…MHYI), 135–157 (IIYE…FVSL), 178–200 (VSSI…AATF), and 215–237 (TFHW…LFSS). Positions 7–201 (YNTTLICLSI…YTGMLAATFH (195 aa)) constitute an MHYT domain. The PAS domain maps to 255 to 319 (QRFQSLIVHN…FEQVKKDKQA (65 aa)). Residues 402 to 536 (YNTVVFFLDL…NKSKYRYYSF (135 aa)) enclose the GGDEF domain. Residues 545–798 (KLNQEMVLRE…QFEQFIIEQP (254 aa)) enclose the EAL domain.

It localises to the cell membrane. Its function is as follows. Probable signaling protein whose physiological role is not yet known. In Bacillus subtilis (strain 168), this protein is Signaling protein YkoW (ykoW).